Consider the following 234-residue polypeptide: Large ribosomal subunit protein uL1 (234 aa).

It belongs to the universal ribosomal protein uL1 family. Part of the 50S ribosomal subunit.

Binds directly to 23S rRNA. The L1 stalk is quite mobile in the ribosome, and is involved in E site tRNA release. Functionally, protein L1 is also a translational repressor protein, it controls the translation of the L11 operon by binding to its mRNA. This is Large ribosomal subunit protein uL1 from Anaeromyxobacter dehalogenans (strain 2CP-1 / ATCC BAA-258).